Consider the following 459-residue polypeptide: Methylenetetrahydrofolate--tRNA-(uracil-5-)-methyltransferase TrmFO (459 aa).

15–20 is an FAD binding site; it reads GAGLAG.

It belongs to the MnmG family. TrmFO subfamily. The cofactor is FAD.

It is found in the cytoplasm. It carries out the reaction uridine(54) in tRNA + (6R)-5,10-methylene-5,6,7,8-tetrahydrofolate + NADH + H(+) = 5-methyluridine(54) in tRNA + (6S)-5,6,7,8-tetrahydrofolate + NAD(+). The enzyme catalyses uridine(54) in tRNA + (6R)-5,10-methylene-5,6,7,8-tetrahydrofolate + NADPH + H(+) = 5-methyluridine(54) in tRNA + (6S)-5,6,7,8-tetrahydrofolate + NADP(+). Catalyzes the folate-dependent formation of 5-methyl-uridine at position 54 (M-5-U54) in all tRNAs. This Syntrophotalea carbinolica (strain DSM 2380 / NBRC 103641 / GraBd1) (Pelobacter carbinolicus) protein is Methylenetetrahydrofolate--tRNA-(uracil-5-)-methyltransferase TrmFO.